The primary structure comprises 127 residues: Fluoride-specific ion channel FluC (127 aa).

4 helical membrane passes run 4 to 24, 37 to 57, 68 to 88, and 96 to 116; these read SLLVIAIGASLGAWLRWLLGM, TVVANMVGGYIIGLAIAFLAA, LIITGFCGGLTTFSTFSAETV, and LLWALGSISLHVVGSLAMTAA. The Na(+) site is built by Gly75 and Thr78.

Belongs to the fluoride channel Fluc/FEX (TC 1.A.43) family.

The protein localises to the cell inner membrane. The catalysed reaction is fluoride(in) = fluoride(out). With respect to regulation, na(+) is not transported, but it plays an essential structural role and its presence is essential for fluoride channel function. Fluoride-specific ion channel. Important for reducing fluoride concentration in the cell, thus reducing its toxicity. The chain is Fluoride-specific ion channel FluC from Pseudomonas syringae pv. maculicola.